A 345-amino-acid polypeptide reads, in one-letter code: Inositol 2-dehydrogenase (345 aa).

Belongs to the Gfo/Idh/MocA family. Homotetramer.

The catalysed reaction is myo-inositol + NAD(+) = scyllo-inosose + NADH + H(+). In terms of biological role, involved in the oxidation of myo-inositol (MI) to 2-keto-myo-inositol (2KMI or 2-inosose). The polypeptide is Inositol 2-dehydrogenase (Mycolicibacterium smegmatis (strain ATCC 700084 / mc(2)155) (Mycobacterium smegmatis)).